A 119-amino-acid chain; its full sequence is Holo-[acyl-carrier-protein] synthase (119 aa).

The Mg(2+) site is built by D8 and E58.

It belongs to the P-Pant transferase superfamily. AcpS family. It depends on Mg(2+) as a cofactor.

The protein localises to the cytoplasm. It catalyses the reaction apo-[ACP] + CoA = holo-[ACP] + adenosine 3',5'-bisphosphate + H(+). In terms of biological role, transfers the 4'-phosphopantetheine moiety from coenzyme A to a Ser of acyl-carrier-protein. The polypeptide is Holo-[acyl-carrier-protein] synthase (Geobacillus sp. (strain WCH70)).